The chain runs to 317 residues: Ribosome production factor 2 homolog (317 aa).

Residues 28–240 enclose the Brix domain; the sequence is KTAIFLRGNA…IRRVQPAESD (213 aa). Positions 287–317 are disordered; that stretch reads MKGLKRSVEEREDSENEEVEIEEDVISDASE. A phosphoserine mark is found at S293, S300, S313, and S316. Residues 296 to 317 show a composition bias toward acidic residues; the sequence is EREDSENEEVEIEEDVISDASE.

It belongs to the RPF2 family. Component of a hexameric 5S RNP precursor complex, composed of 5S RNA, rrs1, rpf2, rpl5a/rpl5b, rpl11a/rpl11b and syo1; this complex acts as a precursor for ribosome assembly.

It localises to the nucleus. Its subcellular location is the nucleolus. The protein is Ribosome production factor 2 homolog of Schizosaccharomyces pombe (strain 972 / ATCC 24843) (Fission yeast).